The sequence spans 342 residues: Tetraacyldisaccharide 4'-kinase (342 aa).

Thr-68–Thr-75 is a binding site for ATP.

This sequence belongs to the LpxK family.

It catalyses the reaction a lipid A disaccharide + ATP = a lipid IVA + ADP + H(+). Its pathway is glycolipid biosynthesis; lipid IV(A) biosynthesis; lipid IV(A) from (3R)-3-hydroxytetradecanoyl-[acyl-carrier-protein] and UDP-N-acetyl-alpha-D-glucosamine: step 6/6. Functionally, transfers the gamma-phosphate of ATP to the 4'-position of a tetraacyldisaccharide 1-phosphate intermediate (termed DS-1-P) to form tetraacyldisaccharide 1,4'-bis-phosphate (lipid IVA). This is Tetraacyldisaccharide 4'-kinase from Burkholderia lata (strain ATCC 17760 / DSM 23089 / LMG 22485 / NCIMB 9086 / R18194 / 383).